The following is a 721-amino-acid chain: Leucine-rich repeat flightless-interacting protein 2 (721 aa).

The segment at 1 to 370 (MGTPASGRKR…YMQGLKELKE (370 aa)) is DVL3-binding. Serine 18 carries the phosphoserine modification. Residues 22–49 (EALSNIAREAEARLAAKRAARAEARDIR) adopt a coiled-coil conformation. A phosphoserine mark is found at glycine 96, leucine 101, tyrosine 168, serine 173, serine 190, and serine 202. 2 disordered regions span residues 232–262 (SARSSPGFTNDDTASIVSSDRASRGRRESVV) and 295–338 (KSDK…IDPD). Composition is skewed to polar residues over residues 237-251 (PGFTNDDTASIVSSD) and 305-338 (TRPSSRNSASATTPLSGNSSRRGSGDTSSLIDPD). 5 positions are modified to phosphoserine: serine 309, serine 312, serine 320, serine 324, and serine 328. Threonine 331 carries the post-translational modification Phosphothreonine. Phosphoserine occurs at positions 332 and 333. Coiled-coil stretches lie at residues 349 to 524 (DLKD…GEKH) and 566 to 714 (LDVR…KANR).

It belongs to the LRRFIP family. Interacts (via N-terminus) with DVL3. Interacts with FLII. Weakly interacts with MYD88 in resting cells. Following LPS-stimulation, the interaction with MYD88 is rapidly enhanced; the complex gradually dissociates to basal levels after 6 hours of stimulation. Interaction with MYD88 is regulated by LPS-induced phosphorylation at Ser-202. In the presence of LPS, competes with FLII for MYD88-binding. Post-translationally, ser-190 and Ser-202 are phosphorylated in response to LPS stimulation. Ser-202 phosphorylation regulates the LPS-induced interaction with MYD88. In terms of tissue distribution, widely expressed, with highest levels in heart and skeletal muscle.

May function as activator of the canonical Wnt signaling pathway, in association with DVL3, upstream of CTNNB1/beta-catenin. Positively regulates Toll-like receptor (TLR) signaling in response to agonist probably by competing with the negative FLII regulator for MYD88-binding. This chain is Leucine-rich repeat flightless-interacting protein 2 (LRRFIP2), found in Homo sapiens (Human).